The sequence spans 471 residues: Coagulation factor IX (471 aa).

An N-terminal signal peptide occupies residues 1-28 (MKHLNTVMAESPALITIFLLGYLLSTEC). Positions 29–46 (AVFLDRENATKILTRPKR) are excised as a propeptide. Residues Y47, N48, E53, E54, E61, E63, E66, E67, E72, E73, and E76 each coordinate Ca(2+). The Gla domain occupies 47-92 (YNSGKLEEFVRGNLERECIEERCSFEEAREVFENTEKTTEFWKQYV). 4-carboxyglutamate is present on residues E53, E54, E61, E63, E66, E67, E72, E73, E76, E79, and E82. A Mg(2+)-binding site is contributed by E61. A disulfide bridge links C64 with C69. Position 66 (E66) interacts with Mg(2+). E72 is a binding site for Mg(2+). Residue E76 participates in Mg(2+) binding. E82 provides a ligand contact to Ca(2+). E82 contacts Mg(2+). Residue T85 is glycosylated (O-linked (GalNAc...) threonine). Ca(2+) contacts are provided by E86, D93, G94, and Q96. E86 carries the 4-carboxyglutamate modification. Residue E86 coordinates Mg(2+). An EGF-like 1; calcium-binding domain is found at 93–129 (DGDQCESNPCLNGGICKDDISSYECWCQVGFEGRNCE). 10 cysteine pairs are disulfide-bonded: C97-C108, C102-C117, C119-C128, C134-C145, C141-C155, C157-C170, C178-C345, C262-C278, C392-C406, and C417-C445. S99 carries O-linked (Glc...) serine glycosylation. Ca(2+) contacts are provided by D110 and D111. A (3R)-3-hydroxyaspartate modification is found at D110. S114 is modified (phosphoserine). The region spanning 130-171 (LDATCNIKNGRCKQFCKNSPDNKVICSCTEGYQLAEDQKSCE) is the EGF-like 2 domain. A propeptide spans 193–236 (AETVFSNMDYENSTEAVFIQDDITDGAILNNVTESSESLNDFTR) (activation peptide). The residue at position 202 (Y202) is a Sulfotyrosine. Residue N204 is glycosylated (N-linked (GlcNAc...) asparagine). At S205 the chain carries Phosphoserine. T206 is subject to Phosphothreonine; alternate. O-linked (GalNAc...) threonine; alternate glycosylation is present at T206. A glycan (N-linked (GlcNAc...) asparagine) is linked at N223. 2 O-linked (GalNAc...) threonine glycosylation sites follow: T225 and T235. A Peptidase S1 domain is found at 237–469 (VVGGENAKPG…YVNWIKEKTK (233 aa)). H277 functions as the Charge relay system in the catalytic mechanism. The Ca(2+) site is built by E291, N293, E298, and E301. The active-site Charge relay system is D325. The active-site Charge relay system is S421.

Belongs to the peptidase S1 family. As to quaternary structure, heterodimer of a light chain and a heavy chain; disulfide-linked. Interacts (inactive and activated) with F11 (activated) in calcium-dependent manner. Interacts with SERPINC1. Post-translationally, activated by factor XIa, which excises the activation peptide. The propeptide can also be removed by snake venom protease. Activated by coagulation factor VIIa-tissue factor (F7-F3) complex in calcium-dependent manner. In terms of processing, the iron and 2-oxoglutarate dependent 3-hydroxylation of aspartate and asparagine is (R) stereospecific within EGF domains. Predominantly O-glucosylated at Ser-99 by POGLUT1 in vitro. In terms of tissue distribution, detected in liver.

The protein localises to the secreted. The enzyme catalyses Selective cleavage of Arg-|-Ile bond in factor X to form factor Xa.. Factor IX is a vitamin K-dependent plasma protein that participates in the intrinsic pathway of blood coagulation by converting factor X to its active form in the presence of Ca(2+) ions, phospholipids, and factor VIIIa. This chain is Coagulation factor IX (F9), found in Mus musculus (Mouse).